Consider the following 386-residue polypeptide: ATP phosphoribosyltransferase regulatory subunit (386 aa).

This sequence belongs to the class-II aminoacyl-tRNA synthetase family. HisZ subfamily. Heteromultimer composed of HisG and HisZ subunits.

The protein localises to the cytoplasm. The protein operates within amino-acid biosynthesis; L-histidine biosynthesis; L-histidine from 5-phospho-alpha-D-ribose 1-diphosphate: step 1/9. In terms of biological role, required for the first step of histidine biosynthesis. May allow the feedback regulation of ATP phosphoribosyltransferase activity by histidine. In Limosilactobacillus fermentum (strain NBRC 3956 / LMG 18251) (Lactobacillus fermentum), this protein is ATP phosphoribosyltransferase regulatory subunit.